The primary structure comprises 1489 residues: MIERGKFRSLTLINWNGFFARTFDLDELVTTLSGGNGAGKSTTMAAFVTALIPDLTLLHFRNTTEAGATSGSRDKGLHGKLKAGVCYSMLDVLNSRHQRVVVGVRLQQVAGRDRKVDIKPFAIQGLPMSVQPTQLVTETLNERQARVLTLAELKEKLDAMEGVQFKQFNSITDYHSLMFDLGIIARRLRSASDRSKFYRLIEASLYGGISSAITRSLRDYLLPENSGVRKAFQDMEAALRENRMTLEAIRVTQSDRDLFKHLISEATNYVAADYMRHANERRVHLDKALEFRRELYTSRKQLAAEQYKHVDMARELGEHNGAEGDLEADYQAASDHLNLVQTALRQQEKIERYEADLDELQIRLEEQNEVVAEAADMQEENEARAEAAELEVDELKSQLADYQQALDVQQTRAIQYNQAIQALDRAKALCHLPDLTADSAAEWLETFQAKEQEATEKLLSLEQKMSVAQTAHSQFEQAYQLVAAINGPLARNEAWSVARDLLREGVEQRHLAEQVQPLRMRLSELEQRLREQQEAERLLAEFCKRQGKHFDIDELEALHQELEARIAALSDSVSNAHEQRMTLRQEQEQLQSRIQHLMQRAPIWLAAQNSLNQLCEQSGEEFTSSQDVTEYLQQLLEREREAIVERDEVGARKNAVDEEIERLSQPGGSEDSRLNALAERFGGVLLSEIYDDVSFEDAPYFSALYGPSRHAIVVPDLSLIAEQLEGLTDCPEDLYFIEGDPQSFDDSVFSVDELENAVVVKTAERQWRYSRFPTVPIFGRAARENRIESLHAEREGLSERFATLSFDVQKTQRLHQAFSRFIGSHLAVAFEADPEAEIRQLNGRRVELERALATHENDNQQQRIQFEQAKEGVSALNRLLPRLNLLADDTLADRVDEIQERLDDAQEAARFIQQHGNQLAKLEPIVSVLQNDPEQFEQLKEDYAYSQQTQRDARQQAFALTEVVQRRAHFSYSDSAEMLSGNSDLNEKLRQRLEQAEAERTRAREALRGHAAQLSQYNQVLASLKSSYDTKKELLGDLQRELQDIGVRADSGSEERARIRRDELHTQLSNNRSRRNQLEKALTFCEAEMDNLTRRLRKLERDYHEMREQVVTAKAGWCAVMRMVKDNGVERRLHRRELAYLSADELRSMSDKALGALRLAVADNEHLRDVLRMSEDPKRPERKIQFFVAVYQHLRERIRQDIIRTDDPVEAIEQMEIELSRLTEELTSREQKLAISSRSVANIIRKTIQREQNRIRMLNQGLQNVSFGQVNSVRLNVNVRETHATLLDVLSEQHEQHQDLFNSNRLTFSEALAKLYQRLNPQIDMGQRTPQTIGEELLDYRNYLEMEVEVNRGSDGWLRAESGALSTGEAIGTGMSILVMVVQSWEDEGRRLRGKDISPCRLLFLDEAARLDARSIATLFELCERLQMQLIIAAPENISPEKGTTYKLVRKVFHNTEHVHVVGLRGFAPQLSETLPGTGTEDASSQAAG.

Glycine 34 to serine 41 is an ATP binding site. Coiled-coil stretches lie at residues leucine 326–glutamine 418, leucine 444–histidine 472, arginine 509–proline 602, arginine 780–serine 805, glutamate 835–leucine 919, glutamate 977–glycine 1116, and valine 1209–serine 1266. A flexible hinge region spans residues proline 666–arginine 783.

This sequence belongs to the SMC family. MukB subfamily. Homodimerization via its hinge domain. Binds to DNA via its C-terminal region. Interacts, and probably forms a ternary complex, with MukE and MukF via its C-terminal region. The complex formation is stimulated by calcium or magnesium. Interacts with tubulin-related protein FtsZ.

The protein resides in the cytoplasm. It is found in the nucleoid. Functionally, plays a central role in chromosome condensation, segregation and cell cycle progression. Functions as a homodimer, which is essential for chromosome partition. Involved in negative DNA supercoiling in vivo, and by this means organize and compact chromosomes. May achieve or facilitate chromosome segregation by condensation DNA from both sides of a centrally located replisome during cell division. This Citrobacter koseri (strain ATCC BAA-895 / CDC 4225-83 / SGSC4696) protein is Chromosome partition protein MukB.